The primary structure comprises 172 residues: Nicotinamide-nucleotide adenylyltransferase (172 aa).

The protein belongs to the archaeal NMN adenylyltransferase family.

It localises to the cytoplasm. The catalysed reaction is beta-nicotinamide D-ribonucleotide + ATP + H(+) = diphosphate + NAD(+). Its pathway is cofactor biosynthesis; NAD(+) biosynthesis; NAD(+) from nicotinamide D-ribonucleotide: step 1/1. This Aeropyrum pernix (strain ATCC 700893 / DSM 11879 / JCM 9820 / NBRC 100138 / K1) protein is Nicotinamide-nucleotide adenylyltransferase.